Consider the following 68-residue polypeptide: Large ribosomal subunit protein uL29 (68 aa).

Belongs to the universal ribosomal protein uL29 family.

The polypeptide is Large ribosomal subunit protein uL29 (Persephonella marina (strain DSM 14350 / EX-H1)).